The chain runs to 91 residues: Small ribosomal subunit protein bS20 (91 aa).

A compositionally biased stretch (basic and acidic residues) spans 1-18 (MPLHKSAEKRLRQSERRN). The tract at residues 1–26 (MPLHKSAEKRLRQSERRNARNRSRKK) is disordered.

It belongs to the bacterial ribosomal protein bS20 family.

Its function is as follows. Binds directly to 16S ribosomal RNA. This is Small ribosomal subunit protein bS20 from Pelodictyon phaeoclathratiforme (strain DSM 5477 / BU-1).